A 131-amino-acid polypeptide reads, in one-letter code: Probable calcium-binding protein CML34 (131 aa).

EF-hand domains are found at residues 1–33 (MSAKRVFEKFDKNKDGKLSLDEFREVALAFSPY), 34–69 (FTQEDIVKFFEEIDVDGNGELNADEFTSCIEKMLKE), 70–97 (VFVFCDVDGDGKIPASESYVTMTSLGKK), and 98–131 (FTEETSAEKVRAADVDGDGYLNFDEFMALVIGDI). Ca(2+) contacts are provided by aspartate 11, asparagine 13, aspartate 15, lysine 17, glutamate 22, aspartate 47, aspartate 49, asparagine 51, glutamate 53, and glutamate 58. 5 residues coordinate Ca(2+): aspartate 111, aspartate 113, aspartate 115, tyrosine 117, and glutamate 122.

In terms of biological role, potential calcium sensor. The chain is Probable calcium-binding protein CML34 (CML34) from Arabidopsis thaliana (Mouse-ear cress).